Reading from the N-terminus, the 51-residue chain is Insulin (51 aa).

Disulfide bonds link cysteine 8–cysteine 37, cysteine 20–cysteine 50, and cysteine 36–cysteine 41.

This sequence belongs to the insulin family. As to quaternary structure, heterodimer of a B chain and an A chain linked by two disulfide bonds.

It localises to the secreted. Its function is as follows. Insulin decreases blood glucose concentration. It increases cell permeability to monosaccharides, amino acids and fatty acids. It accelerates glycolysis, the pentose phosphate cycle, and glycogen synthesis in liver. The chain is Insulin from Pagrus major (Red sea bream).